The following is a 361-amino-acid chain: Histidinol-phosphate aminotransferase (361 aa).

K220 carries the post-translational modification N6-(pyridoxal phosphate)lysine.

This sequence belongs to the class-II pyridoxal-phosphate-dependent aminotransferase family. Histidinol-phosphate aminotransferase subfamily. As to quaternary structure, homodimer. Requires pyridoxal 5'-phosphate as cofactor.

The enzyme catalyses L-histidinol phosphate + 2-oxoglutarate = 3-(imidazol-4-yl)-2-oxopropyl phosphate + L-glutamate. It participates in amino-acid biosynthesis; L-histidine biosynthesis; L-histidine from 5-phospho-alpha-D-ribose 1-diphosphate: step 7/9. The protein is Histidinol-phosphate aminotransferase of Syntrophus aciditrophicus (strain SB).